A 393-amino-acid polypeptide reads, in one-letter code: Acetate kinase (393 aa).

Asparagine 6 serves as a coordination point for Mg(2+). Residue lysine 13 participates in ATP binding. Arginine 87 contacts substrate. Aspartate 143 acts as the Proton donor/acceptor in catalysis. ATP is bound by residues 203-207 (HLGNG), 278-280 (DMR), and 326-330 (GIGEN). Glutamate 380 lines the Mg(2+) pocket.

The protein belongs to the acetokinase family. As to quaternary structure, homodimer. The cofactor is Mg(2+). Mn(2+) serves as cofactor.

The protein resides in the cytoplasm. The enzyme catalyses acetate + ATP = acetyl phosphate + ADP. The protein operates within metabolic intermediate biosynthesis; acetyl-CoA biosynthesis; acetyl-CoA from acetate: step 1/2. In terms of biological role, catalyzes the formation of acetyl phosphate from acetate and ATP. Can also catalyze the reverse reaction. The protein is Acetate kinase of Mycoplasma mycoides subsp. mycoides SC (strain CCUG 32753 / NCTC 10114 / PG1).